Consider the following 261-residue polypeptide: V-type proton ATPase subunit D (261 aa).

Residue serine 241 is modified to Phosphoserine.

The protein belongs to the V-ATPase D subunit family. As to quaternary structure, V-ATPase is a heteromultimeric enzyme composed of a peripheral catalytic V1 complex (components A to H) attached to an integral membrane V0 proton pore complex (components: a, c, c'', d and e).

It is found in the vacuole membrane. Its function is as follows. Subunit of the peripheral V1 complex of vacuolar ATPase. V-ATPase is responsible for acidifying a variety of intracellular compartments in eukaryotic cells, thus providing most of the energy required for transport processes in the vacuolar system. This is V-type proton ATPase subunit D (VHA-D) from Arabidopsis thaliana (Mouse-ear cress).